The primary structure comprises 281 residues: NADPH-dependent 7-cyano-7-deazaguanine reductase (281 aa).

Val89–Ser91 contributes to the substrate binding site. Ser91 to Lys92 is a binding site for NADPH. The active-site Thioimide intermediate is the Cys188. Asp195 (proton donor) is an active-site residue. His227–Glu228 contacts substrate. An NADPH-binding site is contributed by Arg256 to Gly257.

It belongs to the GTP cyclohydrolase I family. QueF type 2 subfamily. Homodimer.

Its subcellular location is the cytoplasm. It catalyses the reaction 7-aminomethyl-7-carbaguanine + 2 NADP(+) = 7-cyano-7-deazaguanine + 2 NADPH + 3 H(+). It functions in the pathway tRNA modification; tRNA-queuosine biosynthesis. Catalyzes the NADPH-dependent reduction of 7-cyano-7-deazaguanine (preQ0) to 7-aminomethyl-7-deazaguanine (preQ1). In Azoarcus sp. (strain BH72), this protein is NADPH-dependent 7-cyano-7-deazaguanine reductase.